The primary structure comprises 238 residues: Large ribosomal subunit protein uL2 (238 aa).

Residues 203–223 (GGGAWKHPGKPTTVSRNAPPG) form a disordered region.

Belongs to the universal ribosomal protein uL2 family. Part of the 50S ribosomal subunit. Forms a bridge to the 30S subunit in the 70S ribosome.

Functionally, one of the primary rRNA binding proteins. Required for association of the 30S and 50S subunits to form the 70S ribosome, for tRNA binding and peptide bond formation. It has been suggested to have peptidyltransferase activity; this is somewhat controversial. Makes several contacts with the 16S rRNA in the 70S ribosome. This Methanosarcina barkeri (strain Fusaro / DSM 804) protein is Large ribosomal subunit protein uL2.